A 50-amino-acid chain; its full sequence is Defensin D4 (50 aa).

Cystine bridges form between C3–C50, C14–C35, C20–C44, and C24–C46.

In terms of tissue distribution, detected in seeds (at protein level).

The protein resides in the secreted. Functionally, antimicrobial peptide with antifungal activity. This Nigella sativa (Black cumin) protein is Defensin D4.